A 1206-amino-acid polypeptide reads, in one-letter code: STE20-like serine/threonine-protein kinase (1206 aa).

The residue at position 14 (S14) is a Phosphoserine. Residues 34–292 (WEIIGELGDG…TSQLLQHPFV (259 aa)) form the Protein kinase domain. ATP is bound by residues 40–48 (LGDGAFGKV) and K63. D155 (proton acceptor) is an active-site residue. A Phosphothreonine modification is found at T183. S189 carries the phosphoserine modification. Residues 308–352 (KAEVTEEVEDGKEEDDDDETESALPIPANKRASSDLSIASSEEDK) form a disordered region. A compositionally biased stretch (acidic residues) spans 312 to 328 (TEEVEDGKEEDDDDETE). Phosphoserine is present on residues S340, S341, S344, S347, S348, S354, and S372. Residues 364–440 (SERTEHNTSG…ESQPDTEDQQ (77 aa)) form a disordered region. 2 stretches are compositionally biased toward basic and acidic residues: residues 381 to 395 (LSEK…KTVD) and 420 to 429 (ENGREKKRPQ). A coiled-coil region spans residues 468 to 492 (EEDRNEENQEIIENKLTQSEEIKDI). Disordered regions lie at residues 515 to 761 (DNEV…SSSD) and 773 to 792 (TKDS…KTLK). Positions 520 to 536 (FTKEETQEKLGKDDKTH) are enriched in basic and acidic residues. Residues S545 and S563 each carry the phosphoserine modification. The span at 556–565 (TQKSAEQSQD) shows a compositional bias: polar residues. Residues 584–609 (KATEGPEAHGAEEEPRSGERVEDKQL) show a composition bias toward basic and acidic residues. Acidic residues predominate over residues 634-643 (EEPETDEVDQ). Residues S645, S649, and S668 each carry the phosphoserine modification. Positions 691 to 702 (AEPQAPAASQAS) are enriched in low complexity. The span at 747-757 (TDSGTGSTVEN) shows a compositional bias: polar residues. Phosphoserine occurs at positions 776 and 778. Phosphothreonine is present on T813. A Phosphoserine modification is found at S817. Positions 825–1037 (LRRQELRELR…LKNRQTQERA (213 aa)) form a coiled coil. The 36-residue stretch at 874-909 (DQEIENLEKQQKQTIERLEQEHTNRLRDEAKRIKGE) folds into the UVR domain. T1065 bears the Phosphothreonine mark. Residues 1077-1151 (AAQEEKRQKN…ELKEWREKLR (75 aa)) are a coiled coil. The span at 1079 to 1099 (QEEKRQKNERMAQHQKHESQM) shows a compositional bias: basic and acidic residues. Disordered stretches follow at residues 1079-1100 (QEEK…SQMR) and 1181-1206 (LNPS…AWAG). The segment covering 1181 to 1200 (LNPSAQSRGCLQTSHPSSTR) has biased composition (polar residues).

The protein belongs to the protein kinase superfamily. STE Ser/Thr protein kinase family. STE20 subfamily. In terms of processing, proteolytically cleaved by caspase-3. Autophosphorylated.

It is found in the cytoplasm. The enzyme catalyses L-seryl-[protein] + ATP = O-phospho-L-seryl-[protein] + ADP + H(+). It carries out the reaction L-threonyl-[protein] + ATP = O-phospho-L-threonyl-[protein] + ADP + H(+). In terms of biological role, mediates apoptosis and actin stress fiber dissolution. The protein is STE20-like serine/threonine-protein kinase (Slk) of Rattus norvegicus (Rat).